Consider the following 60-residue polypeptide: Large ribosomal subunit protein uL30 (60 aa).

This sequence belongs to the universal ribosomal protein uL30 family. As to quaternary structure, part of the 50S ribosomal subunit.

This Saccharopolyspora erythraea (strain ATCC 11635 / DSM 40517 / JCM 4748 / NBRC 13426 / NCIMB 8594 / NRRL 2338) protein is Large ribosomal subunit protein uL30.